The chain runs to 669 residues: DNA ligase (669 aa).

NAD(+) is bound by residues 35–39 (DSVYD), 84–85 (SL), and E116. K118 acts as the N6-AMP-lysine intermediate in catalysis. The NAD(+) site is built by R139, E176, K291, and K315. Positions 409, 412, 427, and 432 each coordinate Zn(2+). The 79-residue stretch at 591 to 669 (TTKATLAGKT…EAQLLELIKA (79 aa)) folds into the BRCT domain.

Belongs to the NAD-dependent DNA ligase family. LigA subfamily. The cofactor is Mg(2+). Mn(2+) serves as cofactor.

The enzyme catalyses NAD(+) + (deoxyribonucleotide)n-3'-hydroxyl + 5'-phospho-(deoxyribonucleotide)m = (deoxyribonucleotide)n+m + AMP + beta-nicotinamide D-nucleotide.. Its function is as follows. DNA ligase that catalyzes the formation of phosphodiester linkages between 5'-phosphoryl and 3'-hydroxyl groups in double-stranded DNA using NAD as a coenzyme and as the energy source for the reaction. It is essential for DNA replication and repair of damaged DNA. The chain is DNA ligase from Microcystis aeruginosa (strain NIES-843 / IAM M-2473).